We begin with the raw amino-acid sequence, 342 residues long: N-acetyl-gamma-glutamyl-phosphate reductase (342 aa).

Cys-149 is a catalytic residue.

It belongs to the NAGSA dehydrogenase family. Type 1 subfamily.

The protein resides in the cytoplasm. It catalyses the reaction N-acetyl-L-glutamate 5-semialdehyde + phosphate + NADP(+) = N-acetyl-L-glutamyl 5-phosphate + NADPH + H(+). It participates in amino-acid biosynthesis; L-arginine biosynthesis; N(2)-acetyl-L-ornithine from L-glutamate: step 3/4. Catalyzes the NADPH-dependent reduction of N-acetyl-5-glutamyl phosphate to yield N-acetyl-L-glutamate 5-semialdehyde. This chain is N-acetyl-gamma-glutamyl-phosphate reductase, found in Thiobacillus denitrificans (strain ATCC 25259 / T1).